The primary structure comprises 595 residues: Fructan 1-exohydrolase (595 aa).

Residues Met1 to Ser20 form the signal peptide. Residue Asp74 is part of the active site. 3 N-linked (GlcNAc...) asparagine glycosylation sites follow: Asn167, Asn235, and Asn247. Cys445 and Cys491 are disulfide-bonded. Residue Asn566 is glycosylated (N-linked (GlcNAc...) asparagine).

It belongs to the glycosyl hydrolase 32 family.

The catalysed reaction is Hydrolysis of terminal, non-reducing (2-&gt;1)-linked beta-D-fructofuranose residues in fructans.. With respect to regulation, inhibited by sucrose. Its function is as follows. Hydrolyzes inulin-type beta-(2,1)-fructans. May play a role as a beta-(2,1)-trimmer during graminan biosynthesis. This chain is Fructan 1-exohydrolase, found in Aegilops speltoides (Goatgrass).